The sequence spans 1342 residues: DNA-directed RNA polymerase subunit beta (1342 aa).

This sequence belongs to the RNA polymerase beta chain family. In terms of assembly, the RNAP catalytic core consists of 2 alpha, 1 beta, 1 beta' and 1 omega subunit. When a sigma factor is associated with the core the holoenzyme is formed, which can initiate transcription.

It catalyses the reaction RNA(n) + a ribonucleoside 5'-triphosphate = RNA(n+1) + diphosphate. DNA-dependent RNA polymerase catalyzes the transcription of DNA into RNA using the four ribonucleoside triphosphates as substrates. The sequence is that of DNA-directed RNA polymerase subunit beta from Pseudoalteromonas atlantica (strain T6c / ATCC BAA-1087).